Here is a 224-residue protein sequence, read N- to C-terminus: UPF0173 metal-dependent hydrolase TK0141 (224 aa).

Belongs to the UPF0173 family.

The protein is UPF0173 metal-dependent hydrolase TK0141 of Thermococcus kodakarensis (strain ATCC BAA-918 / JCM 12380 / KOD1) (Pyrococcus kodakaraensis (strain KOD1)).